A 602-amino-acid polypeptide reads, in one-letter code: Alpha-glucosides permease MPH3 (602 aa).

The Cytoplasmic portion of the chain corresponds to 1–106 (MKNLSFLINR…AAAWSLLVST (106 aa)). A helical transmembrane segment spans residues 107–127 (TLIMEGYDTAILGAFYALPIF). Over 128-142 (QRKFGSQNDKTGEWE) the chain is Extracellular. A helical membrane pass occupies residues 143–163 (ISASWQIGLTLCYMAGEIVGL). Topologically, residues 164–178 (QLTGPSVDLVGNRYT) are cytoplasmic. Residues 179–199 (LIIALFFLAAFTFILYFCNSL) form a helical membrane-spanning segment. Position 200 (glycine 200) is a topological domain, extracellular. A helical transmembrane segment spans residues 201-221 (MIAVGQALCGMPWGCFQCLTV). At 222-234 (SYASEICPLALRY) the chain is on the cytoplasmic side. The chain crosses the membrane as a helical span at residues 235–255 (YLTTYSNLCWLFGQLFAAGIM). Over 256–270 (KNSQKKYADSELGYK) the chain is Extracellular. The helical transmembrane segment at 271 to 291 (LPFALQWILPVPLALGIFFAP) threads the bilayer. Residues 292-363 (ESPWWLVKKG…EDKINRRRTR (72 aa)) lie on the Cytoplasmic side of the membrane. The chain crosses the membrane as a helical span at residues 364–384 (ITCLCWAGQATCGSILIGYST). Topologically, residues 385–397 (YFYEKAGVSTEMS) are extracellular. A helical membrane pass occupies residues 398–418 (FTFSIIQYCLGICATFLSWWA). Residues 419–426 (SKYFGRYD) are Cytoplasmic-facing. The chain crosses the membrane as a helical span at residues 427 to 447 (LYAFGLAFQTIVFFIIGGLGC). Residues 448–459 (SSTHGSKMGSGS) lie on the Extracellular side of the membrane. A helical transmembrane segment spans residues 460-480 (LLMAVAFFYNLGIAPVVFCLV). The Cytoplasmic portion of the chain corresponds to 481–492 (SEMPSSRLRTKT). Residues 493–513 (IILARNTYNVVSIICSVLILY) form a helical membrane-spanning segment. Residues 514 to 525 (QLNSKKWNWGAK) lie on the Extracellular side of the membrane. A helical membrane pass occupies residues 526-546 (SGFFWGVLCFCTLIWAVVDLP). Residues 547–602 (ETAGKTFVEINELFKLGVSARKFKSTKVDPFVVKNPPKDVSHNDPKGDIEASIAEE) lie on the Cytoplasmic side of the membrane. Residues 580–602 (KNPPKDVSHNDPKGDIEASIAEE) are disordered. The segment covering 582 to 595 (PPKDVSHNDPKGDI) has biased composition (basic and acidic residues).

This sequence belongs to the major facilitator superfamily. Sugar transporter (TC 2.A.1.1) family.

The protein resides in the cell membrane. Its function is as follows. High-affinity uptake of maltose and maltotriose. Also transports alpha-methylglucoside, glucose and turanose but not melezitose or trehalose. The chain is Alpha-glucosides permease MPH3 (MPH3) from Saccharomyces cerevisiae (strain AWRI1631) (Baker's yeast).